Here is a 428-residue protein sequence, read N- to C-terminus: MATSWGTVFFMLVVSCVCSAVSHRNQQTWFEGIFLSSMCPINVSASTLYGIMFDAGSTGTRIHVYTFVQKMPGQLPILEGEVFDSVKPGLSAFVDQPKQGAETVQGLLEVAKDSIPRSHWKKTPVVLKATAGLRLLPEHKAKALLFEVKEIFRKSPFLVPKGSVSIMDGSDEGILAWVTVNFLTGQLHGHRQETVGTLDLGGASTQITFLPQFEKTLEQTPRGYLTSFEMFNSTYKLYTHSYLGFGLKAARLATLGALETEGTDGHTFRSACLPRWLEAEWIFGGVKYQYGGNQEGEVGFEPCYAEVLRVVRGKLHQPEEVQRGSFYAFSYYYDRAVDTDMIDYEKGGILKVEDFERKAREVCDNLENFTSGSPFLCMDLSYITALLKDGFGFADSTVLQLTKKVNNIETGWALGATFHLLQSLGISH.

An N-terminal signal peptide occupies residues 1–24 (MATSWGTVFFMLVVSCVCSAVSHR). E172 acts as the Proton acceptor in catalysis. N-linked (GlcNAc...) asparagine glycosylation is present at N232. 2 disulfides stabilise this stretch: C272–C303 and C363–C377. N-linked (GlcNAc...) asparagine glycosylation is present at N368.

The protein belongs to the GDA1/CD39 NTPase family. In terms of assembly, monomer; active form. Homodimer; disulfide-linked. Homodimers are enzymatically inactive. The cofactor is Ca(2+). Mg(2+) serves as cofactor. Post-translationally, N-glycosylated; high-mannose type. Glycosylation is not essential for enzymatic activity. As to expression, expressed in adult liver, kidney, prostate, testis and colon. Much weaker expression in other tissues.

It localises to the endoplasmic reticulum. The protein localises to the secreted. It carries out the reaction a ribonucleoside 5'-diphosphate + H2O = a ribonucleoside 5'-phosphate + phosphate + H(+). It catalyses the reaction GDP + H2O = GMP + phosphate + H(+). The catalysed reaction is UDP + H2O = UMP + phosphate + H(+). The enzyme catalyses IDP + H2O = IMP + phosphate + H(+). It carries out the reaction CDP + H2O = CMP + phosphate + H(+). It catalyses the reaction ADP + H2O = AMP + phosphate + H(+). It functions in the pathway protein modification; protein glycosylation. Hydrolyzes nucleoside diphosphates with a preference for GDP, IDP and UDP compared to ADP and CDP. In the lumen of the endoplasmic reticulum, hydrolyzes UDP that acts as an end-product feedback inhibitor of the UDP-Glc:glycoprotein glucosyltransferases. UMP can be transported back by an UDP-sugar antiporter to the cytosol where it is consumed to regenerate UDP-glucose. Therefore, it positively regulates protein reglucosylation by clearing UDP from the ER lumen and by promoting the regeneration of UDP-glucose. Protein reglucosylation is essential to proper glycoprotein folding and quality control in the ER. In Homo sapiens (Human), this protein is Nucleoside diphosphate phosphatase ENTPD5.